A 227-amino-acid polypeptide reads, in one-letter code: Thiocyanate methyltransferase 1 (227 aa).

Tryptophan 36, tryptophan 40, tryptophan 47, and glycine 74 together coordinate S-adenosyl-L-methionine. The residue at position 86 (serine 86) is a Phosphoserine. Residues aspartate 95, aspartate 123 to valine 124, and tyrosine 139 each bind S-adenosyl-L-methionine.

This sequence belongs to the class I-like SAM-binding methyltransferase superfamily. TPMT family. In terms of tissue distribution, expressed in shoots, leaves, stems, inflorescences, flowers and green siliques.

It catalyses the reaction thiocyanate + S-adenosyl-L-methionine = methyl thiocyanate + S-adenosyl-L-homocysteine. Its function is as follows. S-adenosyl-L-methionine-dependent methyltransferase. Involved in glucosinolate metabolism and defense against phytopathogens. Highly reactive to thiocyanate (NCS(-)) derived from myrosinase-mediated hydrolysis of glucosinolates upon tissue damage. This Arabidopsis thaliana (Mouse-ear cress) protein is Thiocyanate methyltransferase 1.